We begin with the raw amino-acid sequence, 439 residues long: Rhodopsin (439 aa).

The N-linked (GlcNAc...) asparagine glycan is linked to N1. Residues 1–26 (NETWWYNPYMDIHSHWKQFDQVPAAV) lie on the Extracellular side of the membrane. Residues 27–51 (YYSLGIFIAICGIIGCAGNGIVIYL) form a helical membrane-spanning segment. At 52–63 (FTKTKSLQTPAN) the chain is on the cytoplasmic side. A helical transmembrane segment spans residues 64–90 (MFIINLAFSDFTFSLVNGFPMMTISCF). Residues 91-102 (LKHWVFGQAACK) lie on the Extracellular side of the membrane. Residues C101 and C179 are joined by a disulfide bond. Residues 103 to 124 (VYGLIGGIFGLTSIMTMTMISI) traverse the membrane as a helical segment. The 'Ionic lock' involved in activated form stabilization motif lies at 125–127 (DRY). At 125 to 144 (DRYNVIRRPMSASKKMSHRK) the chain is on the cytoplasmic side. The helical transmembrane segment at 145–165 (AFIMIVFVWIWSTIWAIGPIF) threads the bilayer. The Extracellular segment spans residues 166 to 192 (GWGAYQLEGVLCNCSFDYITRDASTRS). Residues 193–217 (NIVCMYIFAFMFPIVVIFFCYFNIV) form a helical membrane-spanning segment. Over 218-254 (MSVSNHEKEMAAMAKRLNAKELRKAQAGASAEMKLAK) the chain is Cytoplasmic. A helical membrane pass occupies residues 255-276 (ISIVIVTQSLLSWSPYAIVALL). Residues 277-286 (AQFGPIEWVT) are Extracellular-facing. Residues 287 to 308 (PYAAQLPVMFAKASAIHNPMIY) traverse the membrane as a helical segment. The residue at position 298 (K298) is an N6-(retinylidene)lysine. Residues 309-439 (SVSHPKFREA…PQAAPPQGVD (131 aa)) lie on the Cytoplasmic side of the membrane. S-palmitoyl cysteine attachment occurs at residues C329 and C330. Residues 369–381 (MMQKMQAQQQQQP) show a composition bias toward low complexity. The interval 369–439 (MMQKMQAQQQ…PQAAPPQGVD (71 aa)) is disordered. Residues 382–433 (AYPPQGYPPQGYPPPPPQGYPPQGYPPQGYPPQGYPPPPQGPPPQGPPPQAA) show a composition bias toward pro residues.

The protein belongs to the G-protein coupled receptor 1 family. Opsin subfamily. Post-translationally, contains one covalently linked retinal chromophore. Upon light absorption, the covalently bound 11-cis-retinal is converted to all-trans-retinal. After hydrolysis of the Schiff base and release of the covalently bound all-trans-retinal, active rhodopsin is regenerated by binding of a fresh molecule of 11-cis-retinal.

It localises to the cell projection. The protein localises to the rhabdomere membrane. Functionally, photoreceptor required for image-forming vision at low light intensity. Light-induced isomerization of 11-cis to all-trans retinal triggers a conformational change that activates signaling via G-proteins. Signaling mediates the activation of phospholipase C. Subsequent receptor phosphorylation mediates displacement of the bound G-protein alpha subunit by arrestin and terminates signaling. The chain is Rhodopsin (RHO) from Alloteuthis subulata (Squid).